Here is a 308-residue protein sequence, read N- to C-terminus: Protoheme IX farnesyltransferase (308 aa).

8 helical membrane passes run 20-40 (LLAYLALTKPRVIELLLVTAI), 50-70 (AIHPLLMLNTLVGGMMAATGA), 102-122 (NALALGLTLTVISFFWLWCAT), 124-144 (LLAGVLALVTVAFYVFVYTLW), 149-169 (TSQNVVWGGAAGCMPVMIGWS), 170-190 (AITGTIAWPALAMFAIIFFWT), 227-249 (LIYTWLTVAATLVLALATSWLYG), and 288-308 (YLAVVFCALAVDSVIALPTLH).

Belongs to the UbiA prenyltransferase family. Protoheme IX farnesyltransferase subfamily.

The protein resides in the cell membrane. The enzyme catalyses heme b + (2E,6E)-farnesyl diphosphate + H2O = Fe(II)-heme o + diphosphate. It functions in the pathway porphyrin-containing compound metabolism; heme O biosynthesis; heme O from protoheme: step 1/1. Functionally, converts heme B (protoheme IX) to heme O by substitution of the vinyl group on carbon 2 of heme B porphyrin ring with a hydroxyethyl farnesyl side group. The chain is Protoheme IX farnesyltransferase from Mycobacterium bovis (strain BCG / Pasteur 1173P2).